The sequence spans 147 residues: Large ribosomal subunit protein bL9 (147 aa).

Belongs to the bacterial ribosomal protein bL9 family.

In terms of biological role, binds to the 23S rRNA. The polypeptide is Large ribosomal subunit protein bL9 (Geotalea uraniireducens (strain Rf4) (Geobacter uraniireducens)).